Reading from the N-terminus, the 366-residue chain is Nucleoporin SEH1 (366 aa).

WD repeat units follow at residues 18-57, 63-104, 111-152, 161-209, 226-267, and 290-329; these read AHRD…NWRR, CHGG…TEKD, QWIR…RIYE, RWNL…VIYE, DMPC…TAIL, and GDQR…QWVK.

The protein belongs to the WD repeat SEC13 family. In terms of assembly, component of the nuclear pore complex (NPC). Probably part of the GATOR complex.

The protein localises to the nucleus. It localises to the nuclear pore complex. It is found in the lysosome membrane. In terms of biological role, probable component of the nuclear pore complex (NPC) which is involved in the trafficking of macromolecules between the cytoplasm and nucleus. As a component of the GATOR complex may function in the amino acid-sensing branch of the TORC1 signaling pathway. The protein is Nucleoporin SEH1 of Caenorhabditis briggsae.